The sequence spans 244 residues: Ribonuclease HII (244 aa).

One can recognise an RNase H type-2 domain in the interval 23–236 (KIILGLDEAG…SKKLLKEFEE (214 aa)). Aspartate 29, glutamate 30, and aspartate 130 together coordinate a divalent metal cation.

It belongs to the RNase HII family. Mn(2+) is required as a cofactor. Mg(2+) serves as cofactor.

The protein localises to the cytoplasm. The enzyme catalyses Endonucleolytic cleavage to 5'-phosphomonoester.. Endonuclease that specifically degrades the RNA of RNA-DNA hybrids. The polypeptide is Ribonuclease HII (Methanococcus vannielii (strain ATCC 35089 / DSM 1224 / JCM 13029 / OCM 148 / SB)).